Here is a 195-residue protein sequence, read N- to C-terminus: BH3-interacting domain death agonist (195 aa).

Met1 carries the N-acetylmethionine modification. Residues 58–69 (TDGSQASRSFNQ) are compositionally biased toward polar residues. The segment at 58–77 (TDGSQASRSFNQGRIEPDSE) is disordered. Residue Ser78 is modified to Phosphoserine. The short motif at 87-100 (ARHLAQIGDEMDHN) is the BH3 element.

As to quaternary structure, forms heterodimers either with the pro-apoptotic protein BAX or the anti-apoptotic protein BCL2. Interacts with PLEKHN1. In terms of assembly, interacts with ITCH. Interacts with MTCH2. In terms of processing, TNF-alpha induces caspase-mediated cleavage into a major p15 and minor p13 and p11 products. Cleaved by CASP6 into a major p15 and minor p13 products, leading to release of cytochrome c and subsequent nonalcoholic steatohepatitis. Post-translationally, ubiquitinated by ITCH; ubiquitination results in proteasome-dependent degradation.

Its subcellular location is the cytoplasm. The protein localises to the mitochondrion membrane. It localises to the mitochondrion outer membrane. Its function is as follows. Induces caspases and apoptosis. Counters the protective effect of BCL2. Induces caspase activation and apoptosis. Allows the release of cytochrome c. In Mus musculus (Mouse), this protein is BH3-interacting domain death agonist (Bid).